The chain runs to 341 residues: Tyrosine recombinase XerC (341 aa).

In terms of domain architecture, Core-binding (CB) spans proline 14–aspartate 105. The region spanning proline 126–glutamate 309 is the Tyr recombinase domain. Catalysis depends on residues arginine 169, lysine 193, histidine 261, arginine 264, and histidine 287. The O-(3'-phospho-DNA)-tyrosine intermediate role is filled by tyrosine 296.

Belongs to the 'phage' integrase family. XerC subfamily. Forms a cyclic heterotetrameric complex composed of two molecules of XerC and two molecules of XerD.

Its subcellular location is the cytoplasm. Functionally, site-specific tyrosine recombinase, which acts by catalyzing the cutting and rejoining of the recombining DNA molecules. The XerC-XerD complex is essential to convert dimers of the bacterial chromosome into monomers to permit their segregation at cell division. It also contributes to the segregational stability of plasmids. This Rhodospirillum centenum (strain ATCC 51521 / SW) protein is Tyrosine recombinase XerC.